The primary structure comprises 248 residues: Small ribosomal subunit protein uS2 (248 aa).

Belongs to the universal ribosomal protein uS2 family.

The protein is Small ribosomal subunit protein uS2 of Cupriavidus necator (strain ATCC 17699 / DSM 428 / KCTC 22496 / NCIMB 10442 / H16 / Stanier 337) (Ralstonia eutropha).